Here is a 350-residue protein sequence, read N- to C-terminus: Biotin synthase (350 aa).

The Radical SAM core domain maps to 42 to 269 (NEVQVSTLCS…QSHVRLSAGR (228 aa)). [4Fe-4S] cluster-binding residues include cysteine 57, cysteine 61, and cysteine 64. [2Fe-2S] cluster contacts are provided by cysteine 101, cysteine 132, cysteine 192, and arginine 264.

The protein belongs to the radical SAM superfamily. Biotin synthase family. In terms of assembly, homodimer. Requires [4Fe-4S] cluster as cofactor. [2Fe-2S] cluster is required as a cofactor.

It catalyses the reaction (4R,5S)-dethiobiotin + (sulfur carrier)-SH + 2 reduced [2Fe-2S]-[ferredoxin] + 2 S-adenosyl-L-methionine = (sulfur carrier)-H + biotin + 2 5'-deoxyadenosine + 2 L-methionine + 2 oxidized [2Fe-2S]-[ferredoxin]. Its pathway is cofactor biosynthesis; biotin biosynthesis; biotin from 7,8-diaminononanoate: step 2/2. Its function is as follows. Catalyzes the conversion of dethiobiotin (DTB) to biotin by the insertion of a sulfur atom into dethiobiotin via a radical-based mechanism. The sequence is that of Biotin synthase from Saccharophagus degradans (strain 2-40 / ATCC 43961 / DSM 17024).